Reading from the N-terminus, the 273-residue chain is Embryonic polyadenylate-binding protein 2 (273 aa).

The segment at Ser22–Glu57 is disordered. Residues Arg143–Thr220 form the RRM domain.

Its subcellular location is the cytoplasm. Its function is as follows. Binds the poly(A) tail of mRNA. The sequence is that of Embryonic polyadenylate-binding protein 2 (Pabpn1l) from Mus musculus (Mouse).